Consider the following 775-residue polypeptide: Tyrosine-protein phosphatase non-receptor type 12 (775 aa).

Met1 carries the N-acetylmethionine modification. At Ser19 the chain carries Phosphoserine. In terms of domain architecture, Tyrosine-protein phosphatase spans Phe28 to Leu293. Substrate is bound by residues Asp199, Cys231–Arg237, and Gln278. Cys231 (phosphocysteine intermediate) is an active-site residue. The interval Ser322–Ser341 is disordered. A phosphoserine mark is found at Ser331, Ser434, Ser448, and Ser467. Positions Val344–Ile437 are interaction with TGFB1I1. A disordered region spans residues Lys462–Thr775. The residue at position 519 (Thr519) is a Phosphothreonine. Ser550 and Ser567 each carry phosphoserine. Over residues Asn558 to Thr573 the composition is skewed to polar residues. Thr569 carries the post-translational modification Phosphothreonine. Ser596 is modified (phosphoserine). Residue Thr598 is modified to Phosphothreonine. Phosphoserine is present on residues Ser603, Ser606, Ser608, and Ser613. Residues Thr622–Ala640 are compositionally biased toward low complexity. A Phosphoserine modification is found at Ser673. The segment covering Val692–Glu711 has biased composition (basic and acidic residues). Position 748 is a phosphoserine (Ser748). Residues Gly766–Thr775 show a composition bias toward basic and acidic residues.

It belongs to the protein-tyrosine phosphatase family. Non-receptor class 4 subfamily. Interacts with PSTPIP1 and TGFB1I1. Interacts with PTK2B/PYK2. Interacts with LPXN. Interacts with SORBS2; this interaction greatly enhances WASF1 dephosphorylation and might mediate partial translocation to focal adhesion sites. Phosphorylated by STK24/MST3 and this results in inhibition of its activity.

The protein resides in the cytoplasm. It localises to the cell junction. Its subcellular location is the focal adhesion. The protein localises to the cell projection. It is found in the podosome. It carries out the reaction O-phospho-L-tyrosyl-[protein] + H2O = L-tyrosyl-[protein] + phosphate. In terms of biological role, dephosphorylates a range of proteins, and thereby regulates cellular signaling cascades. Dephosphorylates cellular tyrosine kinases, such as ERBB2 and PTK2B/PYK2, and thereby regulates signaling via ERBB2 and PTK2B/PYK2. Selectively dephosphorylates ERBB2 phosphorylated at 'Tyr-1112', 'Tyr-1196', and/or 'Tyr-1248'. This is Tyrosine-protein phosphatase non-receptor type 12 (Ptpn12) from Mus musculus (Mouse).